An 864-amino-acid polypeptide reads, in one-letter code: MNYQQQLANSAAIRAEIQRFESVHPNIYSIYELLERLDEPVLQNQIREHVIAIEDAFVNSQEWTLSRSVPELKVGIVGNLASGKSALVHRYLTGTYVQEESPEGGRFKKEIVVDGQSYLLLIRDEGGPPEAQFAMWVDAVIFVFSLEDEISFQTVYHYYSRLANYRNTSEIPMVLVGTQDAISGSNPRVIDDSRARKLSNDLKRCTYYETCATYGLNVERVFQDVAQKIVATRKKQQLSIGPCKSLPNSPSHTSVCSTQVSAVHISQTSNGGGSLSDYSSSVPSTPSTSQKELRIDVPPAASTPTPVRKQSKRRSNLFTSRKGSDPDKDKKGLESRADSIGSGRAIPIKQGMLLKRSGKSLNKEWKKKYVTLSDNGVLTYHPSLHDYMQNVHGKEIDLLRTTVKVPGKRPPRATSSCAPVASPKTNGLTKEVSGLQISPNTGNVTSSTSVTQMASGPSGISLGSFSRMDGMHQRSYSVSSADQWSEGAVITNSAISSDTGLGDSVCSSPSISSTTSPKLDPPPSPHANRKKHRRKKSTSNFKVDGLSSTAEEQEENFEFIIVSLTSQSWHFEATSYEERDAWVQAIESQILASLQSCESSKNKSRLTSQNEALALQSIRNLPGNSHCVDCDAQSPDWASLNLGALMCIECSGIHRNLGTHLSRVRSLDLDDWPPELIKVMSAIGNELANSVWEGSSQGHVKPCSESPREEKERWIRAKYEQRLFLSPLPCRDLPLGQQLLRATAEEDLRAVILLLAHGSREEVNETCGEGDRRTSLHLACRKGNVVLVQLLIWYGVDVMARDFHGNTALAYAKQAVTSEVRELLLQYGCPDEQFVLMATPNLSRKNNRNNNSNAGGSGLMPTLI.

A small GTPase-like region spans residues 66 to 276; the sequence is SRSVPELKVG…QTSNGGGSLS (211 aa). The 175-residue stretch at 67-241 folds into the GLD domain; sequence RSVPELKVGI…TRKKQQLSIG (175 aa). Residues 78 to 85, 122 to 126, and 178 to 181 contribute to the GTP site; these read GNLASGKS, IRDEG, and TQDA. Disordered regions lie at residues 266 to 343, 405 to 455, and 499 to 549; these read SQTS…IGSG, VPGK…QMAS, and TGLG…LSST. The segment covering 275–289 has biased composition (low complexity); it reads LSDYSSSVPSTPSTS. Residues 322 to 337 show a composition bias toward basic and acidic residues; the sequence is KGSDPDKDKKGLESRA. Positions 346–591 constitute a PH domain; the sequence is IPIKQGMLLK…WVQAIESQIL (246 aa). The span at 413-428 shows a compositional bias: polar residues; the sequence is ATSSCAPVASPKTNGL. Low complexity predominate over residues 507–517; it reads SSPSISSTTSP. Basic residues predominate over residues 527–537; it reads ANRKKHRRKKS. Residues 538–549 are compositionally biased toward polar residues; that stretch reads TSNFKVDGLSST. One can recognise an Arf-GAP domain in the interval 612 to 732; the sequence is ALALQSIRNL…LFLSPLPCRD (121 aa). The C4-type zinc-finger motif lies at 627 to 650; the sequence is CVDCDAQSPDWASLNLGALMCIEC. ANK repeat units follow at residues 771–800 and 804–833; these read DRRTSLHLACRKGNVVLVQLLIWYGVDVMA and HGNTALAYAKQAVTSEVRELLLQYGCPDEQ. A compositionally biased stretch (low complexity) spans 845–854; the sequence is KNNRNNNSNA. The interval 845-864 is disordered; sequence KNNRNNNSNAGGSGLMPTLI.

This sequence belongs to the centaurin gamma-like family. As to quaternary structure, homodimer. Interacts with several subunits of the AP-3 protein complex.

The protein localises to the cytoplasm. Its function is as follows. GTPase-activating protein. Directly and specifically regulates the adapter protein 3 (AP-3)-dependent trafficking of proteins in the endosomal-lysosomal system. In Xenopus laevis (African clawed frog), this protein is Arf-GAP with GTPase, ANK repeat and PH domain-containing protein 1 (agap1).